A 107-amino-acid polypeptide reads, in one-letter code: Integration host factor subunit beta (107 aa).

Positions 54-107 (NRRPARVGRNPKSGEKVQVPEKHVPHFKPGKELRERVDGRAGEPLKNDEPEDGQ) are disordered. Positions 65–101 (KSGEKVQVPEKHVPHFKPGKELRERVDGRAGEPLKND) are enriched in basic and acidic residues.

This sequence belongs to the bacterial histone-like protein family. Heterodimer of an alpha and a beta chain.

Functionally, this protein is one of the two subunits of integration host factor, a specific DNA-binding protein that functions in genetic recombination as well as in transcriptional and translational control. The polypeptide is Integration host factor subunit beta (Burkholderia thailandensis (strain ATCC 700388 / DSM 13276 / CCUG 48851 / CIP 106301 / E264)).